Reading from the N-terminus, the 224-residue chain is Putative adhesin RF_1314 (224 aa).

The first 22 residues, 1–22 (MKKLLLIAATSATILSSSISFA), serve as a signal peptide directing secretion.

This chain is Putative adhesin RF_1314, found in Rickettsia felis (strain ATCC VR-1525 / URRWXCal2) (Rickettsia azadi).